The following is a 210-amino-acid chain: Proteasome subunit beta (210 aa).

Residues 1–9 (MDNDKYLKG) constitute a propeptide, removed in mature form; by autocatalysis. The Nucleophile role is filled by Thr-10.

It belongs to the peptidase T1B family. As to quaternary structure, the 20S proteasome core is composed of 14 alpha and 14 beta subunits that assemble into four stacked heptameric rings, resulting in a barrel-shaped structure. The two inner rings, each composed of seven catalytic beta subunits, are sandwiched by two outer rings, each composed of seven alpha subunits. The catalytic chamber with the active sites is on the inside of the barrel. Has a gated structure, the ends of the cylinder being occluded by the N-termini of the alpha-subunits. Is capped at one or both ends by the proteasome regulatory ATPase, PAN.

The protein resides in the cytoplasm. It catalyses the reaction Cleavage of peptide bonds with very broad specificity.. The formation of the proteasomal ATPase PAN-20S proteasome complex, via the docking of the C-termini of PAN into the intersubunit pockets in the alpha-rings, triggers opening of the gate for substrate entry. Interconversion between the open-gate and close-gate conformations leads to a dynamic regulation of the 20S proteasome proteolysis activity. Functionally, component of the proteasome core, a large protease complex with broad specificity involved in protein degradation. The polypeptide is Proteasome subunit beta (Methanosarcina thermophila).